Consider the following 219-residue polypeptide: Probable glutathione S-transferase MSR-1 (219 aa).

Positions 4–83 (NNVVLLDFSG…YIDEVWHEKC (80 aa)) constitute a GST N-terminal domain. Glutathione contacts are provided by residues Ser-14, Lys-41, Ile-55, and 67-68 (ES). In terms of domain architecture, GST C-terminal spans 89–208 (DPYQRSQARF…LPHPHKIYDF (120 aa)).

Belongs to the GST superfamily. HSP26 family.

It catalyses the reaction RX + glutathione = an S-substituted glutathione + a halide anion + H(+). May play an important role in hormonal and growth regulatory responses. This Nicotiana plumbaginifolia (Leadwort-leaved tobacco) protein is Probable glutathione S-transferase MSR-1 (MSR-1).